Consider the following 75-residue polypeptide: MLILSRKTNQKILIGDDIEITIIDIRGDQVKIGVDAPPSVKVFREEIYQEIQNENRAALVRDTELNLPELHIKKK.

Belongs to the CsrA/RsmA family. In terms of assembly, homodimer; the beta-strands of each monomer intercalate to form a hydrophobic core, while the alpha-helices form wings that extend away from the core.

It is found in the cytoplasm. Its function is as follows. A translational regulator that binds mRNA to regulate translation initiation and/or mRNA stability. Usually binds in the 5'-UTR at or near the Shine-Dalgarno sequence preventing ribosome-binding, thus repressing translation. Its main target seems to be the major flagellin gene, while its function is anatagonized by FliW. This Treponema denticola (strain ATCC 35405 / DSM 14222 / CIP 103919 / JCM 8153 / KCTC 15104) protein is Translational regulator CsrA.